Consider the following 834-residue polypeptide: Leucine--tRNA ligase (834 aa).

Positions 40–50 (PYPSGNIHMGH) match the 'HIGH' region motif. The 'KMSKS' region signature appears at 586–590 (KMSKS). Lysine 589 contributes to the ATP binding site.

The protein belongs to the class-I aminoacyl-tRNA synthetase family.

Its subcellular location is the cytoplasm. The catalysed reaction is tRNA(Leu) + L-leucine + ATP = L-leucyl-tRNA(Leu) + AMP + diphosphate. In Nitratidesulfovibrio vulgaris (strain DSM 19637 / Miyazaki F) (Desulfovibrio vulgaris), this protein is Leucine--tRNA ligase.